Here is a 30-residue protein sequence, read N- to C-terminus: Cyclotide mden-I (30 aa).

The segment at residues 1-30 is a cross-link (cyclopeptide (Gly-Asn)); it reads GIPCGESCVYIPCITTAIGCSCKNKVCYRN. 3 cysteine pairs are disulfide-bonded: cysteine 4-cysteine 20, cysteine 8-cysteine 22, and cysteine 13-cysteine 27.

The protein belongs to the cyclotide family. Bracelet subfamily. This is a cyclic peptide.

Functionally, probably participates in a plant defense mechanism. The sequence is that of Cyclotide mden-I from Melicytus dentatus (Tree violet).